Consider the following 159-residue polypeptide: Putative ribosomal RNA large subunit methyltransferase H (159 aa).

S-adenosyl-L-methionine-binding positions include leucine 76, glycine 108, and phenylalanine 127–phenylalanine 132.

It belongs to the RNA methyltransferase RlmH family.

It localises to the cytoplasm. The catalysed reaction is pseudouridine(1915) in 23S rRNA + S-adenosyl-L-methionine = N(3)-methylpseudouridine(1915) in 23S rRNA + S-adenosyl-L-homocysteine + H(+). Functionally, specifically methylates the pseudouridine at position 1915 (m3Psi1915) in 23S rRNA. This is Putative ribosomal RNA large subunit methyltransferase H from Methanococcus maripaludis (strain C5 / ATCC BAA-1333).